Here is a 95-residue protein sequence, read N- to C-terminus: Integration host factor subunit beta (95 aa).

It belongs to the bacterial histone-like protein family. In terms of assembly, heterodimer of an alpha and a beta chain.

Functionally, this protein is one of the two subunits of integration host factor, a specific DNA-binding protein that functions in genetic recombination as well as in transcriptional and translational control. In Shewanella loihica (strain ATCC BAA-1088 / PV-4), this protein is Integration host factor subunit beta.